A 200-amino-acid chain; its full sequence is uncharacterized protein (200 aa).

The tract at residues 149 to 200 is disordered; it reads APDPGGSVATEEVLRSDDRDSHTQDSASEWPEGNDSVGSAAMRIDLSRIGGT. The segment covering 160 to 171 has biased composition (basic and acidic residues); it reads EVLRSDDRDSHT.

This sequence to A.tumefaciens Ti plasmid conjugal transfer region I ORFR2 and ORFR3.

This is an uncharacterized protein from Sinorhizobium fredii (strain NBRC 101917 / NGR234).